The chain runs to 254 residues: Probable septum site-determining protein MinC (254 aa).

Belongs to the MinC family. In terms of assembly, interacts with MinD and FtsZ.

In terms of biological role, cell division inhibitor that blocks the formation of polar Z ring septums. Rapidly oscillates between the poles of the cell to destabilize FtsZ filaments that have formed before they mature into polar Z rings. Prevents FtsZ polymerization. The polypeptide is Probable septum site-determining protein MinC (Burkholderia ambifaria (strain ATCC BAA-244 / DSM 16087 / CCUG 44356 / LMG 19182 / AMMD) (Burkholderia cepacia (strain AMMD))).